A 295-amino-acid chain; its full sequence is Acetaldehyde dehydrogenase (295 aa).

An NAD(+)-binding site is contributed by 11 to 14 (SGNI). C127 (acyl-thioester intermediate) is an active-site residue. NAD(+) contacts are provided by residues 158-166 (SAGPGTRAN) and N270.

This sequence belongs to the acetaldehyde dehydrogenase family.

The enzyme catalyses acetaldehyde + NAD(+) + CoA = acetyl-CoA + NADH + H(+). In Geobacillus thermodenitrificans (strain NG80-2), this protein is Acetaldehyde dehydrogenase (nbaJ).